Reading from the N-terminus, the 148-residue chain is Putative pre-16S rRNA nuclease (148 aa).

This sequence belongs to the YqgF nuclease family.

The protein resides in the cytoplasm. Its function is as follows. Could be a nuclease involved in processing of the 5'-end of pre-16S rRNA. This chain is Putative pre-16S rRNA nuclease, found in Chlamydia trachomatis serovar L2 (strain ATCC VR-902B / DSM 19102 / 434/Bu).